A 482-amino-acid polypeptide reads, in one-letter code: Early growth response protein 4 (482 aa).

Positions 274 to 357 (DLGEGAESLP…PPAKARRKGR (84 aa)) are disordered. A compositionally biased stretch (low complexity) spans 280-290 (ESLPGLLTPPS). The span at 291–302 (GEGGSSGEGGEF) shows a compositional bias: gly residues. Pro residues predominate over residues 337 to 349 (PEPPVPPPAPFPP). C2H2-type zinc fingers lie at residues 376 to 400 (FACP…LRIH), 406 to 428 (FQCR…VRTH), and 434 to 456 (FACD…SKVH).

It belongs to the EGR C2H2-type zinc-finger protein family. As to expression, expressed in brain. In the cerebellum and frontal cortex.

It localises to the nucleus. Its function is as follows. Transcriptional regulator. Recognizes and binds to the DNA sequence 5'-GCGGGGGCG-3' (GSG). Activates the transcription of target genes whose products are required for mitogenesis and differentiation. The chain is Early growth response protein 4 (EGR4) from Bos taurus (Bovine).